Reading from the N-terminus, the 146-residue chain is UPF0260 protein SO_2573 (146 aa).

This sequence belongs to the UPF0260 family.

This Shewanella oneidensis (strain ATCC 700550 / JCM 31522 / CIP 106686 / LMG 19005 / NCIMB 14063 / MR-1) protein is UPF0260 protein SO_2573.